The primary structure comprises 207 residues: Small ribosomal subunit protein uS4 (207 aa).

Residues Ser-97–Val-165 enclose the S4 RNA-binding domain.

It belongs to the universal ribosomal protein uS4 family. In terms of assembly, part of the 30S ribosomal subunit. Contacts protein S5. The interaction surface between S4 and S5 is involved in control of translational fidelity.

One of the primary rRNA binding proteins, it binds directly to 16S rRNA where it nucleates assembly of the body of the 30S subunit. In terms of biological role, with S5 and S12 plays an important role in translational accuracy. The protein is Small ribosomal subunit protein uS4 of Mycoplasmoides gallisepticum (strain R(low / passage 15 / clone 2)) (Mycoplasma gallisepticum).